We begin with the raw amino-acid sequence, 334 residues long: WD repeat-containing protein 54 (334 aa).

WD repeat units lie at residues 116-155, 162-206, and 250-289; these read SSVQ…PNIV, GHQT…TLLT, and AHAR…ESGS.

In terms of assembly, homodimer and homotrimer; forms tight forms of dimers and trimers. Interacts with IZUMO1 and IZUMO1R/JUNO. Cross-linked to tightly form both dimers and trimers by TGM2. Cross-linking enhances the activation of EGF receptor-mediated signaling pathway. Cross-linking is inhibited by EGF. In terms of processing, ubiquitinated. EGF increases ubiquitination.

Its subcellular location is the vesicle. It localises to the cytoplasm. The protein resides in the cell membrane. Its function is as follows. Plays a role in the adhesion and fusion of the sperm-oocyte membrane through its interactions with IZUMO1 and IZUMO1R/JUNO. When cross-linked to form dimers and trimers, it has a regulatory effect on ERK signaling pathway activity in response to EGF stimulation. Colocalizes with the EGF receptor in WDR54-specific vesicle where it sustains the internalization and controls the degradation of the EGF receptor after EGF stimulation. This is WD repeat-containing protein 54 from Mus musculus (Mouse).